Reading from the N-terminus, the 83-residue chain is Erabutoxin b (83 aa).

Residues 1-21 form the signal peptide; sequence MKTLLLTLVVVTIVCLDLGYT. The tract at residues 24-38 is loop I; that stretch reads CFNHQSSQPQTTKTC. Disulfide bonds link Cys-24/Cys-45, Cys-38/Cys-62, Cys-64/Cys-75, and Cys-76/Cys-81. Residues 39–44 are stretch between loop I and loop II; that stretch reads SPGESS. A loop II region spans residues 45-62; that stretch reads CYHKQWSDFRGTIIERGC. The segment at 64–75 is loop III; that stretch reads CPTVKPGIKLSC.

This sequence belongs to the three-finger toxin family. Short-chain subfamily. Type I alpha-neurotoxin sub-subfamily. As to expression, expressed by the venom gland.

The protein localises to the secreted. Its function is as follows. Binds with high affinity to muscular nicotinic acetylcholine receptors (nAChRs) (tested on Torpedo marmorata, Kd=0.07 nM), and with low affinity to neuronal alpha-7/CHRNA7 nAChRs (tested on chimeric alpha-7/CHRNA7, Kd=22 uM) and inhibit acetylcholine from binding to the receptor, thereby impairing neuromuscular transmission. Produces peripheral paralysis by blocking neuromuscular transmission at the postsynaptic site. This chain is Erabutoxin b, found in Laticauda semifasciata (Black-banded sea krait).